The sequence spans 209 residues: NAD(P)H-quinone oxidoreductase subunit K 2 (209 aa).

[4Fe-4S] cluster-binding residues include cysteine 53, cysteine 54, cysteine 118, and cysteine 149.

The protein belongs to the complex I 20 kDa subunit family. NDH-1 can be composed of about 15 different subunits; different subcomplexes with different compositions have been identified which probably have different functions. Requires [4Fe-4S] cluster as cofactor.

The protein localises to the cellular thylakoid membrane. It carries out the reaction a plastoquinone + NADH + (n+1) H(+)(in) = a plastoquinol + NAD(+) + n H(+)(out). The catalysed reaction is a plastoquinone + NADPH + (n+1) H(+)(in) = a plastoquinol + NADP(+) + n H(+)(out). Its function is as follows. NDH-1 shuttles electrons from an unknown electron donor, via FMN and iron-sulfur (Fe-S) centers, to quinones in the respiratory and/or the photosynthetic chain. The immediate electron acceptor for the enzyme in this species is believed to be plastoquinone. Couples the redox reaction to proton translocation, and thus conserves the redox energy in a proton gradient. Cyanobacterial NDH-1 also plays a role in inorganic carbon-concentration. In Acaryochloris marina (strain MBIC 11017), this protein is NAD(P)H-quinone oxidoreductase subunit K 2.